The sequence spans 143 residues: Large ribosomal subunit protein uL11 (143 aa).

Belongs to the universal ribosomal protein uL11 family. As to quaternary structure, part of the ribosomal stalk of the 50S ribosomal subunit. Interacts with L10 and the large rRNA to form the base of the stalk. L10 forms an elongated spine to which L12 dimers bind in a sequential fashion forming a multimeric L10(L12)X complex. One or more lysine residues are methylated.

Its function is as follows. Forms part of the ribosomal stalk which helps the ribosome interact with GTP-bound translation factors. The sequence is that of Large ribosomal subunit protein uL11 from Stutzerimonas stutzeri (strain A1501) (Pseudomonas stutzeri).